Consider the following 879-residue polypeptide: Alanine--tRNA ligase (879 aa).

Positions 566, 570, 668, and 672 each coordinate Zn(2+).

Belongs to the class-II aminoacyl-tRNA synthetase family. The cofactor is Zn(2+).

It localises to the cytoplasm. The catalysed reaction is tRNA(Ala) + L-alanine + ATP = L-alanyl-tRNA(Ala) + AMP + diphosphate. Catalyzes the attachment of alanine to tRNA(Ala) in a two-step reaction: alanine is first activated by ATP to form Ala-AMP and then transferred to the acceptor end of tRNA(Ala). Also edits incorrectly charged Ser-tRNA(Ala) and Gly-tRNA(Ala) via its editing domain. The polypeptide is Alanine--tRNA ligase (Listeria monocytogenes serotype 4b (strain F2365)).